A 234-amino-acid chain; its full sequence is MEKKDMLYEGKAKKIFGTDDKDTVVVYYKDDATAFNGEKKGTIEDKGVMNNSITAMLFELLEKKGVKTHFIEKINEREQLCKKVEIVPLEVIVRNIAAGSMAKRLGLSEGRKLDTTVFEISYKNDDLNDPLINDYHAVAIGLTTFAELKEMYSIAEKVNNTLKEFFDEQGINLVDFKIEIGRFNGELLLADEISPDTCRLWDKSTGEKLDKDRFRRDMGNVKEAYMEILKRVNK.

This sequence belongs to the SAICAR synthetase family.

It catalyses the reaction 5-amino-1-(5-phospho-D-ribosyl)imidazole-4-carboxylate + L-aspartate + ATP = (2S)-2-[5-amino-1-(5-phospho-beta-D-ribosyl)imidazole-4-carboxamido]succinate + ADP + phosphate + 2 H(+). It functions in the pathway purine metabolism; IMP biosynthesis via de novo pathway; 5-amino-1-(5-phospho-D-ribosyl)imidazole-4-carboxamide from 5-amino-1-(5-phospho-D-ribosyl)imidazole-4-carboxylate: step 1/2. This Clostridium botulinum (strain Okra / Type B1) protein is Phosphoribosylaminoimidazole-succinocarboxamide synthase.